Here is a 427-residue protein sequence, read N- to C-terminus: Enolase (427 aa).

Position 162 (Q162) interacts with (2R)-2-phosphoglycerate. Residue E204 is the Proton donor of the active site. Mg(2+) is bound by residues D241, E284, and D311. Residues K336, R365, S366, and K387 each coordinate (2R)-2-phosphoglycerate. K336 acts as the Proton acceptor in catalysis.

It belongs to the enolase family. Requires Mg(2+) as cofactor.

It is found in the cytoplasm. Its subcellular location is the secreted. The protein resides in the cell surface. The enzyme catalyses (2R)-2-phosphoglycerate = phosphoenolpyruvate + H2O. It functions in the pathway carbohydrate degradation; glycolysis; pyruvate from D-glyceraldehyde 3-phosphate: step 4/5. Functionally, catalyzes the reversible conversion of 2-phosphoglycerate (2-PG) into phosphoenolpyruvate (PEP). It is essential for the degradation of carbohydrates via glycolysis. This Natranaerobius thermophilus (strain ATCC BAA-1301 / DSM 18059 / JW/NM-WN-LF) protein is Enolase.